The following is a 473-amino-acid chain: Probable glycine dehydrogenase (decarboxylating) subunit 2 (473 aa).

A disordered region spans residues 1–40 (MEHYEQARYAPAEGETNEPLLSENDQTTVSVDPSLPDDLT). Position 270 is an N6-(pyridoxal phosphate)lysine (lysine 270).

Belongs to the GcvP family. C-terminal subunit subfamily. As to quaternary structure, the glycine cleavage system is composed of four proteins: P, T, L and H. In this organism, the P 'protein' is a heterodimer of two subunits. Requires pyridoxal 5'-phosphate as cofactor.

The enzyme catalyses N(6)-[(R)-lipoyl]-L-lysyl-[glycine-cleavage complex H protein] + glycine + H(+) = N(6)-[(R)-S(8)-aminomethyldihydrolipoyl]-L-lysyl-[glycine-cleavage complex H protein] + CO2. Functionally, the glycine cleavage system catalyzes the degradation of glycine. The P protein binds the alpha-amino group of glycine through its pyridoxal phosphate cofactor; CO(2) is released and the remaining methylamine moiety is then transferred to the lipoamide cofactor of the H protein. This chain is Probable glycine dehydrogenase (decarboxylating) subunit 2, found in Halobacterium salinarum (strain ATCC 700922 / JCM 11081 / NRC-1) (Halobacterium halobium).